A 128-amino-acid chain; its full sequence is Large ribosomal subunit protein bL17 (128 aa).

The protein belongs to the bacterial ribosomal protein bL17 family. Part of the 50S ribosomal subunit. Contacts protein L32.

The polypeptide is Large ribosomal subunit protein bL17 (Streptococcus pyogenes serotype M5 (strain Manfredo)).